The chain runs to 329 residues: Haptoglobin (329 aa).

Asn-9 carries N-linked (GlcNAc...) asparagine glycosylation. The region spanning 13–70 is the Sushi domain; it reads VSLPKPPVIENGYVEHMIRYQCKPFYKLHTEGDGVYTLNSEKHWTNKAVGEKLPECEA. Cystine bridges form between Cys-34/Cys-68 and Cys-72/Cys-189. Residue Arg-84 is a propeptide. A Peptidase S1 domain is found at 85-327; sequence IMGGSVDAKG…VLAWVQETIA (243 aa). N-linked (GlcNAc...) asparagine glycosylation is found at Asn-107 and Asn-214. Cystine bridges form between Cys-232/Cys-263 and Cys-274/Cys-304. Residues 241 to 246 are interaction with CD163; that stretch reads VPEKKS.

Belongs to the peptidase S1 family. As to quaternary structure, tetramer of two alpha and two beta chains; disulfide-linked. The hemoglobin/haptoglobin complex is composed of a haptoglobin dimer bound to two hemoglobin alpha-beta dimers. Interacts with CD163. Interacts with ERGIC3. Expressed by the liver and secreted in plasma.

Its subcellular location is the secreted. The protein localises to the extracellular space. As a result of hemolysis, hemoglobin is found to accumulate in the kidney and is secreted in the urine. Haptoglobin captures, and combines with free plasma hemoglobin to allow hepatic recycling of heme iron and to prevent kidney damage. Haptoglobin also acts as an antioxidant, has antibacterial activity and plays a role in modulating many aspects of the acute phase response. Hemoglobin/haptoglobin complexes are rapidly cleared by the macrophage CD163 scavenger receptor expressed on the surface of liver Kupfer cells through an endocytic lysosomal degradation pathway. The sequence is that of Haptoglobin (HP) from Canis lupus familiaris (Dog).